Reading from the N-terminus, the 616-residue chain is UvrABC system protein C (616 aa).

One can recognise a GIY-YIG domain in the interval 11–85; the sequence is ASPGVYIFRR…IKQHRPHYNV (75 aa). The region spanning 194-229 is the UVR domain; the sequence is APVIARLKADMQAAARAQDFEQAARLRDRVQAVEKL.

The protein belongs to the UvrC family. Interacts with UvrB in an incision complex.

It localises to the cytoplasm. Functionally, the UvrABC repair system catalyzes the recognition and processing of DNA lesions. UvrC both incises the 5' and 3' sides of the lesion. The N-terminal half is responsible for the 3' incision and the C-terminal half is responsible for the 5' incision. The chain is UvrABC system protein C from Deinococcus geothermalis (strain DSM 11300 / CIP 105573 / AG-3a).